A 125-amino-acid chain; its full sequence is Small ribosomal subunit protein uS12 (125 aa).

Residues 1–28 (MPTISQLIGSERKRLTRKTKSPALKSCP) form a disordered region. Position 89 is a 3-methylthioaspartic acid (Asp-89). Residues 104–125 (TAGVKDRRQSRSKYGAKAPKNN) are disordered.

The protein belongs to the universal ribosomal protein uS12 family. In terms of assembly, part of the 30S ribosomal subunit. Contacts proteins S8 and S17. May interact with IF1 in the 30S initiation complex.

Functionally, with S4 and S5 plays an important role in translational accuracy. Its function is as follows. Interacts with and stabilizes bases of the 16S rRNA that are involved in tRNA selection in the A site and with the mRNA backbone. Located at the interface of the 30S and 50S subunits, it traverses the body of the 30S subunit contacting proteins on the other side and probably holding the rRNA structure together. The combined cluster of proteins S8, S12 and S17 appears to hold together the shoulder and platform of the 30S subunit. This chain is Small ribosomal subunit protein uS12, found in Prochlorococcus marinus (strain MIT 9515).